Reading from the N-terminus, the 130-residue chain is MSTEFNYATGRRKTAVARTRLYPGNGTIKINGRPLENYFPRKSLQMIIRQPLVHTKLLDKYDIKINVSGGGVSGQAEAVRHGISRALLEVNPELRSLLKPVGFLTRDARQKERKKYGLRAARAKYQYSKR.

This sequence belongs to the universal ribosomal protein uS9 family.

The polypeptide is Small ribosomal subunit protein uS9 (Lawsonia intracellularis (strain PHE/MN1-00)).